The chain runs to 685 residues: Bifunctional diguanylate cyclase/cyclic di-GMP phosphodiesterase MucR (685 aa).

The 194-residue stretch at 6–199 folds into the MHYT domain; the sequence is YNQVLVAFSL…YTGMAAAQFP (194 aa). The next 7 membrane-spanning stretches (helical) occupy residues 9 to 29, 44 to 64, 77 to 97, 117 to 137, 141 to 161, 175 to 195, and 214 to 234; these read VLVA…LDMA, LIGG…VGML, GLTL…LWLV, GIAA…GIVY, WLGL…WIAF, AGAA…GMAA, and GWLA…ALIV. The Cytoplasmic portion of the chain corresponds to 235 to 685; the sequence is SVLDSRLEAR…PAEQLLASVA (451 aa). A GGDEF domain is found at 293 to 425; sequence RRFAVLFMDL…GRNGYCFFES (133 aa). In terms of domain architecture, EAL spans 434–685; it reads QLQLLHDLRQ…PAEQLLASVA (252 aa). Glutamine 455, glutamate 469, leucine 472, arginine 473, asparagine 528, and glutamine 533 together coordinate 3',3'-c-di-GMP. Glutamate 469 is a Mg(2+) binding site. Asparagine 528 is a Mg(2+) binding site. Residues glutamate 560, aspartate 590, and aspartate 591 each contribute to the Mg(2+) site. 3',3'-c-di-GMP is bound at residue aspartate 590. Arginine 614 is a 3',3'-c-di-GMP binding site. Glutamate 647 provides a ligand contact to Mg(2+). Residues glutamate 650 and phenylalanine 669 each coordinate 3',3'-c-di-GMP.

As to quaternary structure, homodimer. It depends on Mg(2+) as a cofactor.

It is found in the cell inner membrane. The catalysed reaction is 2 GTP = 3',3'-c-di-GMP + 2 diphosphate. The enzyme catalyses 3',3'-c-di-GMP + H2O = 5'-phosphoguanylyl(3'-&gt;5')guanosine + H(+). Its function is as follows. Displays both diguanylate cyclase (DGC) and c-di-GMP-specific phosphodiesterase (PDE) activity. Probably modulates DGC and PDE activities, and thus c-di-GMP levels, in a growth mode-dependent manner. May act as a PDE under planktonic growth conditions and as a DGC in biofilms. During biofilm formation, it specifically activates alginate biosynthesis via generation of a localized c-di-GMP pool in the vicinity of the alginate biosynthesis protein Alg44. This is Bifunctional diguanylate cyclase/cyclic di-GMP phosphodiesterase MucR from Pseudomonas aeruginosa (strain ATCC 15692 / DSM 22644 / CIP 104116 / JCM 14847 / LMG 12228 / 1C / PRS 101 / PAO1).